The sequence spans 492 residues: Beclin 1-associated autophagy-related key regulator (492 aa).

Residue serine 29 is modified to Phosphoserine. A cysteine repeats region spans residues 43–58 (CPLCNTTRRRLTCAKC). Positions 71–180 (DRERFIDKKE…KLGDLVEKKT (110 aa)) form a coiled coil. The tract at residues 410-473 (PGVAGESDES…PIASSSAGGM (64 aa)) is disordered. The BATS stretch occupies residues 413-492 (AGESDESGDE…SWFKAYTGHR (80 aa)). Positions 415-433 (ESDESGDERVSDEETDLGT) are enriched in acidic residues. A Phosphoserine modification is found at serine 416. Residue threonine 429 is modified to Phosphothreonine. Low complexity predominate over residues 448 to 473 (SQSVEVSQSQSTQASPPIASSSAGGM).

The protein belongs to the ATG14 family. Forms homooligomers; homo-oligomerization is essential for the roles in membrane tethering and enhancement of SNARE-mediated fusion. Component of the PI3K (PI3KC3/PI3K-III/class III phosphatidylinositol 3-kinase) complex I (PI3KC3-C1) in which the core composed of the catalytic subunit PIK3C3, the regulatory subunit PIK3R4 and BECN1 is associated with ATG14. PI3KC3-C1 displays a V-shaped architecture with PIK3R4 serving as a bridge between PIK3C3 and the ATG14:BECN1 subcomplex. PI3KC3-C1 can associate with further regulatory subunits. Interacts with PIK3CB. Interacts (via coiled-coil domain) with BECN2 (via coiled-coil domain); this interaction is tighter than BECN2 self-association. Interacts with the STX17-SNAP29 binary t-SNARE complex. Interacts with NRBF2. Interacts with PIK3C3 and BECN1; this interaction is increased in the absence of TMEM39A. Interacts with STEEP1; the interaction is required for trafficking of STING1 from the endoplasmic reticulum. Interacts with ARMC3 (via ARM domains). Ubiquitinated via 'Lys-6', 'Lys-11' and 'Lys-63'-linked polyubiquitin chains on multiple lysines by MARCHF7, leading to ATG14 aggregation and loss of interaction with STX17.

It is found in the cytoplasm. The protein localises to the endoplasmic reticulum membrane. Its subcellular location is the preautophagosomal structure membrane. It localises to the cytoplasmic vesicle. The protein resides in the autophagosome membrane. Required for both basal and inducible autophagy. Determines the localization of the autophagy-specific PI3-kinase complex PI3KC3-C1. Plays a role in autophagosome formation and MAP1LC3/LC3 conjugation to phosphatidylethanolamine. Promotes BECN1 translocation from the trans-Golgi network to autophagosomes. Enhances PIK3C3 activity in a BECN1-dependent manner. Essential for the autophagy-dependent phosphorylation of BECN1. Stimulates the phosphorylation of BECN1, but suppresses the phosphorylation PIK3C3 by AMPK. Binds to STX17-SNAP29 binary t-SNARE complex on autophagosomes and primes it for VAMP8 interaction to promote autophagosome-endolysosome fusion. Modulates the hepatic lipid metabolism. The protein is Beclin 1-associated autophagy-related key regulator of Homo sapiens (Human).